A 149-amino-acid chain; its full sequence is Large ribosomal subunit protein uL13 (149 aa).

This sequence belongs to the universal ribosomal protein uL13 family. In terms of assembly, part of the 50S ribosomal subunit.

In terms of biological role, this protein is one of the early assembly proteins of the 50S ribosomal subunit, although it is not seen to bind rRNA by itself. It is important during the early stages of 50S assembly. The chain is Large ribosomal subunit protein uL13 from Borrelia duttonii (strain Ly).